The following is a 516-amino-acid chain: Exoglucanase 1 (516 aa).

The signal sequence occupies residues 1 to 17 (MRASLLAFSLAAAVAGG). The catalytic stretch occupies residues 18 to 445 (QQAGTLTAKR…GHLGISPFSG (428 aa)). N-linked (GlcNAc...) asparagine glycosylation occurs at Asn-45. Glu-223 (nucleophile) is an active-site residue. Catalysis depends on Glu-228, which acts as the Proton donor. N-linked (GlcNAc...) asparagine glycosylation occurs at Asn-281. The interval 444–481 (SGGSSGTPPSNPSSSASPTSSTAKPSSTSTASNPSGTG) is disordered. The interval 446 to 480 (GSSGTPPSNPSSSASPTSSTAKPSSTSTASNPSGT) is linker. Residues 449-481 (GTPPSNPSSSASPTSSTAKPSSTSTASNPSGTG) are compositionally biased toward low complexity. The CBM1 domain maps to 480–516 (TGAAHWAQCGGIGFSGPTTCPEPYTCAKDHDIYSQCV). 2 disulfides stabilise this stretch: Cys-488–Cys-505 and Cys-499–Cys-515.

Belongs to the glycosyl hydrolase 7 (cellulase C) family.

Its subcellular location is the secreted. The enzyme catalyses Hydrolysis of (1-&gt;4)-beta-D-glucosidic linkages in cellulose and cellotetraose, releasing cellobiose from the non-reducing ends of the chains.. This is Exoglucanase 1 (cbh-1) from Neurospora crassa (strain ATCC 24698 / 74-OR23-1A / CBS 708.71 / DSM 1257 / FGSC 987).